We begin with the raw amino-acid sequence, 1664 residues long: Peroxisome proliferator-activated receptor gamma coactivator-related protein 1 (1664 aa).

Disordered regions lie at residues 1-44 (MAAR…GTLG), 167-255 (LLTL…VASF), 436-555 (PVVP…EGPL), 681-701 (VDPV…VSSA), 735-793 (IESG…ADIP), 818-873 (CLVP…PTPP), and 1045-1068 (HGAP…HPKH). Over residues 12–22 (APPPSGGPGPD) the composition is skewed to pro residues. Residues 23-32 (PGGGARGSGW) are compositionally biased toward gly residues. Low complexity predominate over residues 201–224 (SLPDPSWDFSPPSFLETSSPKLPS). Ser-237 bears the Phosphoserine mark. Residues 433–467 (VVEPVVPKEPQNPPANAAPGSQRARKGRKKKSKEQ) form a necessary for interaction with CREB1 and NRF1 and for transcriptional coactivation region. Basic residues predominate over residues 455–464 (RARKGRKKKS). Polar residues predominate over residues 482–499 (SSRGQSTVGTEVTSQVDN). A compositionally biased stretch (low complexity) spans 522 to 531 (RAWARAWAAA). Positions 533–549 (ENSSPKNLERSAGQSSP) are enriched in polar residues. Phosphoserine is present on residues Ser-536 and Ser-548. A compositionally biased stretch (pro residues) spans 823-836 (GPSPASPSPEPPVS). A compositionally biased stretch (low complexity) spans 862–873 (VQSVSPAVPTPP). At Ser-1076 the chain carries Phosphoserine. Disordered regions lie at residues 1093–1130 (EEPA…STVP), 1182–1209 (SEAK…DIPQ), and 1334–1528 (VLSL…DHYQ). The span at 1096–1113 (ASERLKPETQETRPREKP) shows a compositional bias: basic and acidic residues. A compositionally biased stretch (low complexity) spans 1365 to 1383 (PSAPCLAPSSLLSPEASPC). The segment at 1379-1450 (EASPCRNDMN…SSSSSSSSSS (72 aa)) is necessary for interaction with CREB1 and NRF1. The span at 1400 to 1409 (RSMRCYRKAC) shows a compositional bias: basic residues. Phosphoserine occurs at positions 1411 and 1413. Low complexity-rich tracts occupy residues 1427 to 1459 (SRSV…RSLS) and 1468 to 1500 (SSCS…SSSR). Residues 1501 to 1519 (SRSRSPSPRRRSDRRRRYS) show a composition bias toward basic residues. An RRM domain is found at 1543-1619 (RVVFIGKIPG…QPFDLCFGGR (77 aa)).

Interacts with CREB1 and NRF1. In terms of tissue distribution, strongly expressed in heart and skeletal muscle, moderately in lung, placenta, intestine, liver, kidney, spleen, thymus, colon and brain. Also expressed in several oncocytic thyroid tumors.

It is found in the nucleus. In terms of biological role, acts as a coactivator during transcriptional activation of nuclear genes related to mitochondrial biogenesis and cell growth. Involved in the transcription coactivation of CREB and NRF1 target genes. In Homo sapiens (Human), this protein is Peroxisome proliferator-activated receptor gamma coactivator-related protein 1 (PPRC1).